Consider the following 324-residue polypeptide: Phospho-N-acetylmuramoyl-pentapeptide-transferase (324 aa).

The next 10 helical transmembrane spans lie at 5-25, 52-72, 77-97, 122-142, 149-169, 176-196, 201-221, 227-247, 253-273, and 302-322; these read GLLV…PLFI, PTMG…IMAI, LGAE…IGFL, VIAI…YIMI, FELG…GSNA, LDGL…IIAV, FGVA…LVFN, VFMG…VAIL, LLVI…IQVI, and VVVT…YIGV.

Belongs to the glycosyltransferase 4 family. MraY subfamily. It depends on Mg(2+) as a cofactor.

The protein localises to the cell membrane. The catalysed reaction is UDP-N-acetyl-alpha-D-muramoyl-L-alanyl-gamma-D-glutamyl-meso-2,6-diaminopimeloyl-D-alanyl-D-alanine + di-trans,octa-cis-undecaprenyl phosphate = di-trans,octa-cis-undecaprenyl diphospho-N-acetyl-alpha-D-muramoyl-L-alanyl-D-glutamyl-meso-2,6-diaminopimeloyl-D-alanyl-D-alanine + UMP. It functions in the pathway cell wall biogenesis; peptidoglycan biosynthesis. Its function is as follows. Catalyzes the initial step of the lipid cycle reactions in the biosynthesis of the cell wall peptidoglycan: transfers peptidoglycan precursor phospho-MurNAc-pentapeptide from UDP-MurNAc-pentapeptide onto the lipid carrier undecaprenyl phosphate, yielding undecaprenyl-pyrophosphoryl-MurNAc-pentapeptide, known as lipid I. The polypeptide is Phospho-N-acetylmuramoyl-pentapeptide-transferase (Bacillus cereus (strain AH820)).